Consider the following 77-residue polypeptide: MSNIEERVKKIIVEQLGVDEAEVKNEASFVDDLGADSLDTVELVMALEEEFDTEIPDEEAEKITTVQAAIDYVNSAQ.

The Carrier domain maps to 2-77 (SNIEERVKKI…AAIDYVNSAQ (76 aa)). Serine 37 carries the post-translational modification O-(pantetheine 4'-phosphoryl)serine.

It belongs to the acyl carrier protein (ACP) family. Post-translationally, 4'-phosphopantetheine is transferred from CoA to a specific serine of apo-ACP by AcpS. This modification is essential for activity because fatty acids are bound in thioester linkage to the sulfhydryl of the prosthetic group.

Its subcellular location is the cytoplasm. The protein operates within lipid metabolism; fatty acid biosynthesis. In terms of biological role, carrier of the growing fatty acid chain in fatty acid biosynthesis. The chain is Acyl carrier protein from Vibrio campbellii (strain ATCC BAA-1116).